Reading from the N-terminus, the 341-residue chain is Phospholipid phosphatase homolog 1.2 homolog (341 aa).

Transmembrane regions (helical) follow at residues 30-50 (LFIFFLATAAVTVIVPTLLGV), 71-91 (ITAVQLMLYNLVLNAATVLFV), and 122-142 (LLTYFGYSQIGFVMNIALNIV). N-linked (GlcNAc...) asparagine glycosylation is present at Asn-162. 2 helical membrane passes run 223 to 243 (RIVVPISQTLMFMIGLGISFS) and 257 to 277 (VGIFIGIFLAVYTCTFWTDLF). 2 disordered regions span residues 284 to 308 (SETQPLLLPRPPRTPRNSEDEERHR) and 322 to 341 (FEATGPQDSDTILLPVPQSA). Basic and acidic residues predominate over residues 299 to 308 (RNSEDEERHR).

The protein belongs to the PA-phosphatase related phosphoesterase family.

Its subcellular location is the membrane. This chain is Phospholipid phosphatase homolog 1.2 homolog, found in Caenorhabditis elegans.